A 176-amino-acid polypeptide reads, in one-letter code: NAD(P)H-quinone oxidoreductase subunit 6, chloroplastic (176 aa).

A run of 5 helical transmembrane segments spans residues 10–30, 33–53, 60–80, 95–115, and 152–172; these read ILVLFGGFVLLLGGLGVVLLT, IYSAFSLGLVLVCISLFYFLL, VAQLLIYVGAINVLIIFAVMF, IGDGFTLLLCITIPFSLMTTI, and FYLPFELISLILLVSLIGAIT.

This sequence belongs to the complex I subunit 6 family. NDH is composed of at least 16 different subunits, 5 of which are encoded in the nucleus.

The protein resides in the plastid. It is found in the chloroplast thylakoid membrane. It carries out the reaction a plastoquinone + NADH + (n+1) H(+)(in) = a plastoquinol + NAD(+) + n H(+)(out). The enzyme catalyses a plastoquinone + NADPH + (n+1) H(+)(in) = a plastoquinol + NADP(+) + n H(+)(out). NDH shuttles electrons from NAD(P)H:plastoquinone, via FMN and iron-sulfur (Fe-S) centers, to quinones in the photosynthetic chain and possibly in a chloroplast respiratory chain. The immediate electron acceptor for the enzyme in this species is believed to be plastoquinone. Couples the redox reaction to proton translocation, and thus conserves the redox energy in a proton gradient. In Saccharum hybrid (Sugarcane), this protein is NAD(P)H-quinone oxidoreductase subunit 6, chloroplastic (ndhG).